Reading from the N-terminus, the 179-residue chain is Hypoxanthine phosphoribosyltransferase (179 aa).

Residues Arg-45 and Gly-46 each coordinate diphosphate. Glu-101 lines the GMP pocket. Glu-101 is an IMP binding site. Glu-101 and Asp-102 together coordinate Mg(2+). The Proton acceptor role is filled by Asp-105. GMP-binding positions include Asp-105–Leu-110, Lys-133, and Asp-161. Residues Asp-105–Leu-110 and Lys-133 contribute to the IMP site. Arg-167 serves as a coordination point for diphosphate.

Belongs to the purine/pyrimidine phosphoribosyltransferase family. Homotetramer. Mg(2+) serves as cofactor.

It is found in the cytoplasm. It carries out the reaction IMP + diphosphate = hypoxanthine + 5-phospho-alpha-D-ribose 1-diphosphate. The enzyme catalyses GMP + diphosphate = guanine + 5-phospho-alpha-D-ribose 1-diphosphate. Its pathway is purine metabolism; IMP biosynthesis via salvage pathway; IMP from hypoxanthine: step 1/1. Functionally, purine salvage pathway enzyme which catalyzes the transfer of the ribosyl-5-phosphate group from 5-phospho-alpha-D-ribose 1-diphosphate (PRPP) to the N9 position of hypoxanthine to yield IMP (inosine 5'-monophosphate). To a lesser extent, can also act on guanine leading to GMP, but shows a highly less efficient activity with xanthine. The chain is Hypoxanthine phosphoribosyltransferase (hpt) from Haemophilus influenzae (strain ATCC 51907 / DSM 11121 / KW20 / Rd).